The chain runs to 193 residues: Ion-translocating oxidoreductase complex subunit A (193 aa).

The next 6 helical transmembrane spans lie at 5 to 25 (LLILVSTILVNNFVLVQFLGL), 38 to 58 (AMGMSLATTFVLTLSSLCSYL), 65 to 85 (APLGMEFLKTITFILVIAVVV), 102 to 122 (VLGIFLPLITTNCAVLGVALL), 134 to 154 (ILYGFGAAVGFSLVLTLFSAM), and 171 to 191 (AIGMITAGLMSLAFLGFTGLV).

It belongs to the NqrDE/RnfAE family. The complex is composed of six subunits: RnfA, RnfB, RnfC, RnfD, RnfE and RnfG.

The protein localises to the cell inner membrane. In terms of biological role, part of a membrane-bound complex that couples electron transfer with translocation of ions across the membrane. The chain is Ion-translocating oxidoreductase complex subunit A from Hahella chejuensis (strain KCTC 2396).